The sequence spans 155 residues: Fibroblast growth factor 1 (155 aa).

The propeptide occupies 1–15 (MAEGEITTFTALTER). Asparagine 33 is a heparin binding site. The heparin-binding stretch occupies residues 127-143 (KKNGNSKLGPRTHYGQK).

This sequence belongs to the heparin-binding growth factors family.

The protein resides in the secreted. It localises to the cytoplasm. Its subcellular location is the cell cortex. It is found in the cytosol. The protein localises to the nucleus. Functionally, plays an important role in the regulation of cell survival, cell division, angiogenesis, cell differentiation and cell migration. Functions as a potent mitogen in vitro. Acts as a ligand for FGFR1 and integrins. Binds to FGFR1 in the presence of heparin leading to FGFR1 dimerization and activation via sequential autophosphorylation on tyrosine residues which act as docking sites for interacting proteins, leading to the activation of several signaling cascades. Binds to integrins. Its binding to integrins and subsequent ternary complex formation with integrins and FGFR1 are essential for FGF1 signaling. This Gallus gallus (Chicken) protein is Fibroblast growth factor 1 (FGF1).